Reading from the N-terminus, the 193-residue chain is Fe/S biogenesis protein NfuA (193 aa).

[4Fe-4S] cluster-binding residues include Cys150 and Cys153.

It belongs to the NfuA family. Homodimer. It depends on [4Fe-4S] cluster as a cofactor.

Functionally, involved in iron-sulfur cluster biogenesis. Binds a 4Fe-4S cluster, can transfer this cluster to apoproteins, and thereby intervenes in the maturation of Fe/S proteins. Could also act as a scaffold/chaperone for damaged Fe/S proteins. In Histophilus somni (strain 129Pt) (Haemophilus somnus), this protein is Fe/S biogenesis protein NfuA.